Consider the following 329-residue polypeptide: Phenylalanine--tRNA ligase alpha subunit (329 aa).

Residue E254 participates in Mg(2+) binding.

The protein belongs to the class-II aminoacyl-tRNA synthetase family. Phe-tRNA synthetase alpha subunit type 1 subfamily. In terms of assembly, tetramer of two alpha and two beta subunits. Mg(2+) serves as cofactor.

It is found in the cytoplasm. The enzyme catalyses tRNA(Phe) + L-phenylalanine + ATP = L-phenylalanyl-tRNA(Phe) + AMP + diphosphate + H(+). This chain is Phenylalanine--tRNA ligase alpha subunit, found in Haemophilus influenzae (strain 86-028NP).